A 139-amino-acid polypeptide reads, in one-letter code: Large ribosomal subunit protein uL16 (139 aa).

It belongs to the universal ribosomal protein uL16 family. As to quaternary structure, part of the 50S ribosomal subunit.

Its function is as follows. Binds 23S rRNA and is also seen to make contacts with the A and possibly P site tRNAs. The chain is Large ribosomal subunit protein uL16 from Chlorobium chlorochromatii (strain CaD3).